Consider the following 766-residue polypeptide: Single-minded homolog 1 (766 aa).

Residues 1 to 53 (MKEKSKNAARTRREKENSEFYELAKLLPLPSAITSQLDKASIIRLTTSYLKMR) form the bHLH domain. 2 consecutive PAS domains span residues 77–147 (GREL…QPYH) and 218–288 (PPSA…LVKG). Positions 292–335 (TKYYRFLAKHGGWVWVQSYATIVHNSRSSRPHCIVSVNYVLTDT) constitute a PAC domain. Residues 336-766 (EYKGLQLSLD…GTSVIITNGS (431 aa)) enclose the Single-minded C-terminal domain. The segment covering 353-365 (AFSYTSSSTPTMT) has biased composition (polar residues). Disordered regions lie at residues 353–431 (AFSY…SQHD) and 528–563 (WDED…EPSK). The Nuclear localization signal motif lies at 368–387 (RKGAKSRLSSSKSKSRTSPY). Low complexity predominate over residues 373–385 (SRLSSSKSKSRTS). The segment covering 394–404 (HTERSESDHDS) has biased composition (basic and acidic residues).

As to quaternary structure, efficient DNA binding requires dimerization with another bHLH protein. Heterodimer; forms a heterodimer with ARNT, ARNT2.

Its subcellular location is the nucleus. Transcriptional factor that may have pleiotropic effects during embryogenesis and in the adult. In Homo sapiens (Human), this protein is Single-minded homolog 1 (SIM1).